The sequence spans 119 residues: Iron-sulfur cluster insertion protein ErpA (119 aa).

Positions 47, 111, and 113 each coordinate iron-sulfur cluster.

The protein belongs to the HesB/IscA family. In terms of assembly, homodimer. Iron-sulfur cluster is required as a cofactor.

In terms of biological role, required for insertion of 4Fe-4S clusters for at least IspG. The sequence is that of Iron-sulfur cluster insertion protein ErpA from Blochmanniella floridana.